The primary structure comprises 466 residues: F-box/WD repeat-containing protein 15 (466 aa).

Residues 1–45 (MAIHLPCLPMMKILSYLDAYSLLQAAQVNKDWNELASSDVLWRKL) form the F-box domain. WD repeat units lie at residues 101–143 (GYAC…ITWK), 146–185 (EQPASIKLLTTLPEMHIAVTVDIQSTIKLWDCHNREALAT), 187–228 (NLKS…LIST), 339–379 (LQCH…KTFQ), and 381–419 (CPEMIVKLSVDPLHVIVICNTGSMDVYAWEERSLLLRKC).

In terms of assembly, part of an SCF (SKP1-CUL1-F-box protein) E3 ubiquitin-protein ligase complex. Interacts with KAT7 and SKP1. Specifically expressed in oocytes from follicles of the medullary region of the ovary.

It is found in the cytoplasm. The protein localises to the cytosol. The protein resides in the endoplasmic reticulum. It localises to the nucleus. Its pathway is protein modification; protein ubiquitination. Its function is as follows. Substrate-recognition component of an SCF (SKP1-CUL1-F-box protein)-type E3 ubiquitin ligase complex. Promotes KAT7 ubiquitination and subsequent degradation in collaboration with MAP2K1 kinase, leading to reduced histone H3K14 acetylation and increased cell proliferation. The chain is F-box/WD repeat-containing protein 15 from Mus musculus (Mouse).